The primary structure comprises 347 residues: NADH-ubiquinone oxidoreductase chain 2 (347 aa).

Transmembrane regions (helical) follow at residues W26 to M46, F60 to L80, S96 to P116, S123 to Y143, I151 to N171, I178 to P198, L200 to M220, M240 to F260, D274 to M294, and L325 to I345.

This sequence belongs to the complex I subunit 2 family. Core subunit of respiratory chain NADH dehydrogenase (Complex I) which is composed of 45 different subunits. Interacts with TMEM242.

The protein localises to the mitochondrion inner membrane. It catalyses the reaction a ubiquinone + NADH + 5 H(+)(in) = a ubiquinol + NAD(+) + 4 H(+)(out). Functionally, core subunit of the mitochondrial membrane respiratory chain NADH dehydrogenase (Complex I) which catalyzes electron transfer from NADH through the respiratory chain, using ubiquinone as an electron acceptor. Essential for the catalytic activity and assembly of complex I. In Dugong dugon (Dugong), this protein is NADH-ubiquinone oxidoreductase chain 2.